The sequence spans 209 residues: ATP synthase subunit b 2 (209 aa).

The helical transmembrane segment at W9 to F29 threads the bilayer.

The protein belongs to the ATPase B chain family. F-type ATPases have 2 components, F(1) - the catalytic core - and F(0) - the membrane proton channel. F(1) has five subunits: alpha(3), beta(3), gamma(1), delta(1), epsilon(1). F(0) has three main subunits: a(1), b(2) and c(10-14). The alpha and beta chains form an alternating ring which encloses part of the gamma chain. F(1) is attached to F(0) by a central stalk formed by the gamma and epsilon chains, while a peripheral stalk is formed by the delta and b chains.

The protein resides in the cell inner membrane. Functionally, f(1)F(0) ATP synthase produces ATP from ADP in the presence of a proton or sodium gradient. F-type ATPases consist of two structural domains, F(1) containing the extramembraneous catalytic core and F(0) containing the membrane proton channel, linked together by a central stalk and a peripheral stalk. During catalysis, ATP synthesis in the catalytic domain of F(1) is coupled via a rotary mechanism of the central stalk subunits to proton translocation. Component of the F(0) channel, it forms part of the peripheral stalk, linking F(1) to F(0). This Desulfosudis oleivorans (strain DSM 6200 / JCM 39069 / Hxd3) (Desulfococcus oleovorans) protein is ATP synthase subunit b 2.